Reading from the N-terminus, the 115-residue chain is Virion-associated protein (115 aa).

2 coiled-coil regions span residues 1 to 28 (MAATLSEIRELIQSLTKTANEIKAMLER) and 33 to 54 (KPTGIEEAAAKIIKDIGDKIDQ). A compositionally biased stretch (polar residues) spans 96–106 (GNEELGSSGNP). A disordered region spans residues 96-115 (GNEELGSSGNPNAVKWPPRK).

It belongs to the caulimovirus ORF III family. In terms of assembly, homotetramer, through coiled-coil domain. Homotrimer when interacts with icosehadral capsid. Interacts with capsid protein, and with Movement protein.

The protein localises to the virion. Its subcellular location is the host cell junction. It localises to the host plasmodesma. In terms of biological role, plays a role in virus cell-to-cell and plant-to-plant transmission. Interacts with virion icosahedral capsid and movement protein, thereby facilitating virion cell-to-cell transmission through plasmodesmata opened by viral movement protein. Also interacts with aphid transmission factor, attaching the virion to aphid stylet when the animal feeds on an virus infected plant. Aphid saliva may later detach the virion, inducing release of infectious particles when the animal feeds on a new plant. In Scrophularia californica (California bee plant), this protein is Virion-associated protein.